Here is a 359-residue protein sequence, read N- to C-terminus: UPF0496 protein At3g57100 (359 aa).

A coiled-coil region spans residues 179–208 (HEELAKMVVKLEKTMKDIDKKLRRVRGRRA). The helical transmembrane segment at 214–234 (LLAPVIAVIFLSKLVAGLVPI) threads the bilayer.

This sequence belongs to the UPF0496 family.

Its subcellular location is the membrane. The polypeptide is UPF0496 protein At3g57100 (Arabidopsis thaliana (Mouse-ear cress)).